The primary structure comprises 68 residues: Large ribosomal subunit protein uL29 (68 aa).

The protein belongs to the universal ribosomal protein uL29 family.

The sequence is that of Large ribosomal subunit protein uL29 from Methanobrevibacter smithii (strain ATCC 35061 / DSM 861 / OCM 144 / PS).